Consider the following 429-residue polypeptide: Glucose-6-phosphate isomerase (429 aa).

Glu-282 (proton donor) is an active-site residue. Residues His-303 and Lys-418 contribute to the active site.

This sequence belongs to the GPI family.

The protein localises to the cytoplasm. The catalysed reaction is alpha-D-glucose 6-phosphate = beta-D-fructose 6-phosphate. The protein operates within carbohydrate biosynthesis; gluconeogenesis. It participates in carbohydrate degradation; glycolysis; D-glyceraldehyde 3-phosphate and glycerone phosphate from D-glucose: step 2/4. Its function is as follows. Catalyzes the reversible isomerization of glucose-6-phosphate to fructose-6-phosphate. This Mesomycoplasma hyopneumoniae (strain 7448) (Mycoplasma hyopneumoniae) protein is Glucose-6-phosphate isomerase.